The following is a 98-amino-acid chain: Glutaredoxin 1 (98 aa).

Positions Met-1 to Asp-98 constitute a Glutaredoxin domain. A disulfide bridge links Cys-17 with Cys-20.

It belongs to the glutaredoxin family. As to quaternary structure, monomer.

It is found in the cytoplasm. In terms of biological role, has a glutathione-disulfide oxidoreductase activity in the presence of NADPH and glutathione reductase. Reduces low molecular weight disulfides and proteins. The sequence is that of Glutaredoxin 1 (grxC1) from Rickettsia bellii (strain RML369-C).